A 2183-amino-acid polypeptide reads, in one-letter code: Coagulation factor V (2183 aa).

Residues 1 to 19 (MLLVCPCFFLLVVLGTRWA) form the signal peptide. Plastocyanin-like domains lie at 30-192 (QLRQ…LLIC), 202-328 (TQKM…IKNC), 347-524 (KRWE…LLIC), and 534-682 (VQRV…DVKC). F5/8 type A domains are found at residues 30-328 (QLRQ…IKNC) and 347-682 (KRWE…DVKC). Residues D138 and D139 each coordinate Ca(2+). N-linked (GlcNAc...) asparagine glycans are attached at residues N176, N238, and N381. Position 638 is a phosphothreonine (T638). Positions 691-1533 (SYEIYEPPAP…PDTIAAWYLR (843 aa)) are b. Residues Y692 and Y725 each carry the sulfotyrosine modification. Residues 737–1533 (SFKNSSLNPE…PDTIAAWYLR (797 aa)) constitute a propeptide, activation peptide (connecting region). An N-linked (GlcNAc...) asparagine glycan is attached at N841. 3 disordered regions span residues 884–904 (PAGK…MKSE), 947–1045 (DVDK…FPDR), and 1059–1144 (ETAL…YDLS). Residues 892–908 (SNPKNSYSGMKSEEDIP) are 1 X 17 AA tandem repeats. Residues 892–911 (SNPKNSYSGMKSEEDIPSEL) form a 1-1 repeat. S903 is subject to Phosphoserine. The segment covering 951–975 (LTNSPQNQNITVPRGESTSHTNTTR) has biased composition (polar residues). N-linked (GlcNAc...) asparagine glycosylation is found at N959 and N972. Residues 1010 to 1021 (RTRKKKKNKKLA) are compositionally biased toward basic residues. Polar residues-rich tracts occupy residues 1059-1099 (ETAL…SLDL) and 1120-1134 (THST…SPPE). Repeat copies occupy residues 1175-1183 (IPSSDLSLF), 1184-1192 (TISPELDQT), 1193-1201 (IIYPDLDQL), 1202-1210 (LLSPEDNQK), 1211-1219 (TSSPDLGQV), 1220-1228 (PLSPDDNQK), 1229-1237 (TSSPDLGQV), 1238-1246 (SLSPDDNQK), 1247-1255 (TSSPDLGQV), 1256-1264 (PLSLDDNQK), 1265-1273 (TTSPDLGQV), 1274-1282 (PLSPDDNQM), 1283-1291 (ITSPDLGQV), 1292-1299 (PLSSDNQK), 1300-1308 (TSSPDLGQV), 1309-1316 (PLFPEDNQ), 1317-1325 (NYFLDLSQV), 1326-1334 (PLSSDQNQE), 1335-1341 (TSSTDLL), 1342-1350 (TLSPDFGQT), 1351-1359 (VLSPDLDQL), 1360-1368 (PLPSDNSQV), 1369-1377 (TVSPDLSLL), 1378-1386 (TLSPDFNEI), 1387-1395 (ILAPDLGQV), 1396-1404 (TLSPDLIQT), 1405-1413 (NPALNHGHK), 1414-1422 (ASSADPDQA), 1423-1431 (SYPPDSGQA), 1432-1440 (SSLPELNRT), 1441-1449 (LPHPDLTHI), and 1452-1461 (PSPSPTLNNT). The interval 1175 to 1461 (IPSSDLSLFT…PSPSPTLNNT (287 aa)) is 32 X 9 AA approximate tandem repeats of [TNP]-L-S-P-D-L-S-Q-T. The segment at 1204 to 1312 (SPEDNQKTSS…PDLGQVPLFP (109 aa)) is disordered. Residues 1228–1251 (KTSSPDLGQVSLSPDDNQKTSSPD) show a composition bias toward polar residues. Positions 1292 to 1304 (PLSSDNQKTSSPD) are enriched in polar residues. The disordered stretch occupies residues 1403-1462 (QTNPALNHGHKASSADPDQASYPPDSGQASSLPELNRTLPHPDLTHIPPPSPSPTLNNTS). N1438 carries N-linked (GlcNAc...) asparagine glycosylation. 2 Plastocyanin-like domains span residues 1538-1711 (HKKF…LLIC) and 1721-1866 (NLPM…DKEC). The F5/8 type A 3 domain occupies 1538–1866 (HKKFYYIAAE…TPFLIIDKEC (329 aa)). Cu cation contacts are provided by H1802 and H1804. An N-linked (GlcNAc...) asparagine glycan is attached at N1811. 2 consecutive F5/8 type C domains span residues 1866 to 2020 (CKMP…LQGC) and 2025 to 2180 (CSTP…LFGC). 2 cysteine pairs are disulfide-bonded: C1866-C2020 and C2025-C2180.

It belongs to the multicopper oxidase family. As to quaternary structure, factor Va, the activated form of factor V, is composed of a heavy chain and a light chain, non-covalently bound. The interaction between the two chains is calcium-dependent. Forms heterodimer with SERPINA5. Thrombin activates factor V proteolytically to the active cofactor, factor Va (formation of a heavy chain at the N-terminus and a light chain at the C-terminus). In terms of processing, sulfation is required for efficient thrombin cleavage and activation and for full procoagulant activity. Post-translationally, activated protein C inactivates factor V and factor Va by proteolytic degradation.

Its subcellular location is the secreted. With respect to regulation, inhibited by SERPINA5. In terms of biological role, central regulator of hemostasis. It serves as a critical cofactor for the prothrombinase activity of factor Xa that results in the activation of prothrombin to thrombin. The polypeptide is Coagulation factor V (F5) (Mus musculus (Mouse)).